A 774-amino-acid polypeptide reads, in one-letter code: 5-methyltetrahydropteroyltriglutamate--homocysteine methyltransferase (774 aa).

5-methyltetrahydropteroyltri-L-glutamate contacts are provided by residues 23 to 26 (RELK) and K123. Residues 446 to 448 (IGS) and E499 each bind L-homocysteine. L-methionine contacts are provided by residues 446-448 (IGS) and E499. 5-methyltetrahydropteroyltri-L-glutamate is bound by residues 530-531 (RC) and W576. D614 is a binding site for L-homocysteine. D614 serves as a coordination point for L-methionine. E620 contacts 5-methyltetrahydropteroyltri-L-glutamate. Zn(2+)-binding residues include H656, C658, and E680. The active-site Proton donor is H709. C741 serves as a coordination point for Zn(2+).

It belongs to the vitamin-B12 independent methionine synthase family. It depends on Zn(2+) as a cofactor.

The enzyme catalyses 5-methyltetrahydropteroyltri-L-glutamate + L-homocysteine = tetrahydropteroyltri-L-glutamate + L-methionine. It functions in the pathway amino-acid biosynthesis; L-methionine biosynthesis via de novo pathway; L-methionine from L-homocysteine (MetE route): step 1/1. Catalyzes the transfer of a methyl group from 5-methyltetrahydrofolate to homocysteine resulting in methionine formation. This chain is 5-methyltetrahydropteroyltriglutamate--homocysteine methyltransferase, found in Aliivibrio fischeri (strain MJ11) (Vibrio fischeri).